Reading from the N-terminus, the 164-residue chain is MSITFGELVGNFILVTGSVIVLLLLIKKFAWGAIESILQTRSQQISRDIDQAEQSRLSAQQLEAKSQANLDASRSQASKIISDAKEIGQLQGDKLVAEATDEAKRLKEKALTDIEQSKSDAISAVKTEMSDLTVLLAEKIMGANLDKTAQSQLIDSYLDDLGEA.

A helical membrane pass occupies residues 6–26 (GELVGNFILVTGSVIVLLLLI).

The protein belongs to the ATPase B chain family. In terms of assembly, F-type ATPases have 2 components, F(1) - the catalytic core - and F(0) - the membrane proton channel. F(1) has five subunits: alpha(3), beta(3), gamma(1), delta(1), epsilon(1). F(0) has three main subunits: a(1), b(2) and c(10-14). The alpha and beta chains form an alternating ring which encloses part of the gamma chain. F(1) is attached to F(0) by a central stalk formed by the gamma and epsilon chains, while a peripheral stalk is formed by the delta and b chains.

The protein localises to the cell membrane. Functionally, f(1)F(0) ATP synthase produces ATP from ADP in the presence of a proton or sodium gradient. F-type ATPases consist of two structural domains, F(1) containing the extramembraneous catalytic core and F(0) containing the membrane proton channel, linked together by a central stalk and a peripheral stalk. During catalysis, ATP synthesis in the catalytic domain of F(1) is coupled via a rotary mechanism of the central stalk subunits to proton translocation. Its function is as follows. Component of the F(0) channel, it forms part of the peripheral stalk, linking F(1) to F(0). The polypeptide is ATP synthase subunit b (Streptococcus pyogenes serotype M12 (strain MGAS2096)).